Consider the following 438-residue polypeptide: Trigger factor (438 aa).

Residues 162–247 (GDIVTIDFEG…VKEIKVKELP (86 aa)) enclose the PPIase FKBP-type domain.

The protein belongs to the FKBP-type PPIase family. Tig subfamily.

Its subcellular location is the cytoplasm. The catalysed reaction is [protein]-peptidylproline (omega=180) = [protein]-peptidylproline (omega=0). Functionally, involved in protein export. Acts as a chaperone by maintaining the newly synthesized protein in an open conformation. Functions as a peptidyl-prolyl cis-trans isomerase. The sequence is that of Trigger factor from Caldicellulosiruptor saccharolyticus (strain ATCC 43494 / DSM 8903 / Tp8T 6331).